The sequence spans 211 residues: Small ribosomal subunit protein uS3 (211 aa).

The KH type-2 domain maps to 38–106 (LRNFLKKRLY…EVYLNIQEVR (69 aa)).

It belongs to the universal ribosomal protein uS3 family. In terms of assembly, part of the 30S ribosomal subunit. Forms a tight complex with proteins S10 and S14.

Functionally, binds the lower part of the 30S subunit head. Binds mRNA in the 70S ribosome, positioning it for translation. The sequence is that of Small ribosomal subunit protein uS3 from Geobacter sp. (strain M21).